The following is a 306-amino-acid chain: Cathepsin Z (306 aa).

The N-terminal stretch at 1 to 20 is a signal peptide; the sequence is MLAILFNFFLLTYFTNITLG. A propeptide spans 21-65 (activation peptide); sequence KVGKSIDLDTRNGYNVHGCYKQTGKIYAHKTYPRQYEAENYNFDD. 5 disulfide bridges follow: cysteine 39–cysteine 96, cysteine 93–cysteine 136, cysteine 130–cysteine 168, cysteine 158–cysteine 174, and cysteine 177–cysteine 182. Residue cysteine 96 is part of the active site. N-linked (GlcNAc...) asparagine glycosylation occurs at asparagine 187. Cysteine 217 and cysteine 299 are oxidised to a cystine. Catalysis depends on residues histidine 243 and asparagine 265. Asparagine 286 is a glycosylation site (N-linked (GlcNAc...) asparagine).

This sequence belongs to the peptidase C1 family.

Its subcellular location is the cytoplasmic vesicle. The protein localises to the secretory vesicle. It localises to the secreted. The catalysed reaction is Release of C-terminal amino acid residues with broad specificity, but lacks action on C-terminal proline. Shows weak endopeptidase activity.. The disulfide bridge formed between Cys-39 in the propeptide and the active site residue Cys-96 may prevent activation of the zymogen through formation of a reversible covalent bond with the active site residue. In terms of biological role, exhibits carboxy-monopeptidase as well as carboxy-dipeptidase activity. Plays an essential role in molting, a process during larval stages in which a new cuticle is formed and the old cuticle is shed. Required for the degradation and shedding of the old cuticle. The chain is Cathepsin Z from Onchocerca volvulus.